The following is a 464-amino-acid chain: NADH-quinone oxidoreductase subunit N (464 aa).

Transmembrane regions (helical) follow at residues 6 to 26 (FLYI…LVLG), 36 to 56 (SMSL…LIYF), 75 to 95 (CLAR…FFFA), 101 to 121 (YEFA…VEAH), 123 to 143 (FLSF…LVCF), 157 to 177 (FFVL…LVYG), 197 to 217 (LGAT…LGAV), 231 to 253 (PTVA…FAGL), 257 to 279 (VVIP…MVVG), 293 to 313 (FAYA…TGVV), 317 to 337 (PVLF…TVLL), 360 to 380 (AFTF…SGFF), 395 to 415 (FGVP…IPCF), and 439 to 459 (NVGL…VVLL).

Belongs to the complex I subunit 2 family. As to quaternary structure, NDH-1 is composed of 14 different subunits. Subunits NuoA, H, J, K, L, M, N constitute the membrane sector of the complex.

The protein localises to the cell inner membrane. The enzyme catalyses a quinone + NADH + 5 H(+)(in) = a quinol + NAD(+) + 4 H(+)(out). Its function is as follows. NDH-1 shuttles electrons from NADH, via FMN and iron-sulfur (Fe-S) centers, to quinones in the respiratory chain. The immediate electron acceptor for the enzyme in this species is believed to be ubiquinone. Couples the redox reaction to proton translocation (for every two electrons transferred, four hydrogen ions are translocated across the cytoplasmic membrane), and thus conserves the redox energy in a proton gradient. This Anaplasma phagocytophilum (strain HZ) protein is NADH-quinone oxidoreductase subunit N.